The sequence spans 312 residues: tRNA-dihydrouridine(16) synthase (312 aa).

FMN is bound by residues 7–9 and Gln68; that span reads PMQ. Residue Cys98 is the Proton donor of the active site. Residues Lys139, 200–202, and 224–225 each bind FMN; these read NGE and GR.

The protein belongs to the Dus family. DusC subfamily. The cofactor is FMN.

It catalyses the reaction 5,6-dihydrouridine(16) in tRNA + NADP(+) = uridine(16) in tRNA + NADPH + H(+). The catalysed reaction is 5,6-dihydrouridine(16) in tRNA + NAD(+) = uridine(16) in tRNA + NADH + H(+). Catalyzes the synthesis of 5,6-dihydrouridine (D), a modified base found in the D-loop of most tRNAs, via the reduction of the C5-C6 double bond in target uridines. Specifically modifies U16 in tRNAs. The polypeptide is tRNA-dihydrouridine(16) synthase (Pasteurella multocida (strain Pm70)).